The chain runs to 321 residues: S-methyl-5'-thioadenosine phosphorylase (321 aa).

Phosphate contacts are provided by residues Thr-30, 73-74 (RH), and 106-107 (SA). Met-215 lines the substrate pocket. A phosphate-binding site is contributed by Ser-216. 239 to 241 (DYD) is a substrate binding site.

Belongs to the PNP/MTAP phosphorylase family. MTAP subfamily. As to quaternary structure, homotrimer.

It localises to the cytoplasm. The protein localises to the nucleus. It catalyses the reaction S-methyl-5'-thioadenosine + phosphate = 5-(methylsulfanyl)-alpha-D-ribose 1-phosphate + adenine. It functions in the pathway amino-acid biosynthesis; L-methionine biosynthesis via salvage pathway; S-methyl-5-thio-alpha-D-ribose 1-phosphate from S-methyl-5'-thioadenosine (phosphorylase route): step 1/1. Functionally, catalyzes the reversible phosphorylation of S-methyl-5'-thioadenosine (MTA) to adenine and 5-methylthioribose-1-phosphate. Involved in the breakdown of MTA, a major by-product of polyamine biosynthesis. Responsible for the first step in the methionine salvage pathway after MTA has been generated from S-adenosylmethionine. Has broad substrate specificity with 6-aminopurine nucleosides as preferred substrates. The sequence is that of S-methyl-5'-thioadenosine phosphorylase from Yarrowia lipolytica (strain CLIB 122 / E 150) (Yeast).